The following is a 203-amino-acid chain: uncharacterized protein (203 aa).

The next 4 membrane-spanning stretches (helical) occupy residues Y9–A29, F42–V62, S86–V106, and Y126–L146. Composition is skewed to basic and acidic residues over residues G164 to S174 and D182 to D191. A disordered region spans residues G164 to L203. A compositionally biased stretch (polar residues) spans P194–L203.

It is found in the cell membrane. This is an uncharacterized protein from Mycoplasma pneumoniae (strain ATCC 29342 / M129 / Subtype 1) (Mycoplasmoides pneumoniae).